The primary structure comprises 122 residues: Large ribosomal subunit protein uL14 (122 aa).

It belongs to the universal ribosomal protein uL14 family. As to quaternary structure, part of the 50S ribosomal subunit. Forms a cluster with proteins L3 and L19. In the 70S ribosome, L14 and L19 interact and together make contacts with the 16S rRNA in bridges B5 and B8.

Functionally, binds to 23S rRNA. Forms part of two intersubunit bridges in the 70S ribosome. This chain is Large ribosomal subunit protein uL14, found in Lachnospira eligens (strain ATCC 27750 / DSM 3376 / VPI C15-48 / C15-B4) (Eubacterium eligens).